Reading from the N-terminus, the 204-residue chain is Superoxide dismutase [Mn] (204 aa).

Histidine 27 lines the Mn(2+) pocket. Phosphothreonine occurs at positions 34 and 70. Histidine 82, aspartate 164, and histidine 168 together coordinate Mn(2+).

It belongs to the iron/manganese superoxide dismutase family. As to quaternary structure, homodimer. The cofactor is Mn(2+).

It catalyses the reaction 2 superoxide + 2 H(+) = H2O2 + O2. Destroys superoxide anion radicals which are normally produced within the cells and which are toxic to biological systems. The chain is Superoxide dismutase [Mn] (sodA) from Geobacillus stearothermophilus (Bacillus stearothermophilus).